The sequence spans 86 residues: Large ribosomal subunit protein bL31B (86 aa).

The protein belongs to the bacterial ribosomal protein bL31 family. Type B subfamily. In terms of assembly, part of the 50S ribosomal subunit.

The protein is Large ribosomal subunit protein bL31B of Cupriavidus taiwanensis (strain DSM 17343 / BCRC 17206 / CCUG 44338 / CIP 107171 / LMG 19424 / R1) (Ralstonia taiwanensis (strain LMG 19424)).